We begin with the raw amino-acid sequence, 319 residues long: Type II methyltransferase M.MpnI (319 aa).

Belongs to the N(4)/N(6)-methyltransferase family.

The enzyme catalyses a 2'-deoxyadenosine in DNA + S-adenosyl-L-methionine = an N(6)-methyl-2'-deoxyadenosine in DNA + S-adenosyl-L-homocysteine + H(+). In terms of biological role, a methylase that recognizes the double-stranded sequence 5'-CTAT-3' and methylates A-3 on one strand; probably responsible for all of the methylation on this site in the genome. This chain is Type II methyltransferase M.MpnI, found in Mycoplasma pneumoniae (strain ATCC 29342 / M129 / Subtype 1) (Mycoplasmoides pneumoniae).